The following is a 308-amino-acid chain: uncharacterized protein (308 aa).

Glu59 is an active-site residue.

Belongs to the PhzF family.

This is an uncharacterized protein from Deinococcus radiodurans (strain ATCC 13939 / DSM 20539 / JCM 16871 / CCUG 27074 / LMG 4051 / NBRC 15346 / NCIMB 9279 / VKM B-1422 / R1).